Here is a 391-residue protein sequence, read N- to C-terminus: Ferrochelatase (391 aa).

Fe cation-binding residues include H196 and E281.

This sequence belongs to the ferrochelatase family.

Its subcellular location is the cytoplasm. The catalysed reaction is heme b + 2 H(+) = protoporphyrin IX + Fe(2+). It functions in the pathway porphyrin-containing compound metabolism; protoheme biosynthesis; protoheme from protoporphyrin-IX: step 1/1. Its function is as follows. Catalyzes the ferrous insertion into protoporphyrin IX. In Prochlorococcus marinus (strain NATL2A), this protein is Ferrochelatase.